A 343-amino-acid polypeptide reads, in one-letter code: MEEELRNLIKVWISALISISYCYYISSKISKGVLRLLSLLPIFIIFLLLPLFFSSVHFCVISGFFFTWLANFKLFLFAFDQEPLSPLPSNLTRFFCFACFPIKINKNPSSNRIHNKPMSKWVLAFKLLIFSFLLHVYRNNYDSGLSRFAFLALFTIHVYLEAELILVFVGALMSMLLGCEMEPVFNDPYLATSLQEFWSRRWNLMVPAVLRPAVHIPVQRFCAPLLGLHRAFYAGMLATFIVSGLMHELIYFYVIRKSPTWEVTCFFLLHGVVTCLEIAMKRMRWLPTPRRAVSGLAITVFLLVTAGWLFYPQMLRNDVHKRVISECLLVIDVVKRHVVCILM.

The next 8 helical transmembrane spans lie at 7–27 (NLIKVWISALISISYCYYISS), 36–56 (LLSLLPIFIIFLLLPLFFSSV), 58–78 (FCVISGFFFTWLANFKLFLFA), 117–137 (PMSKWVLAFKLLIFSFLLHVY), 148–168 (FAFLALFTIHVYLEAELILVF), 235–255 (GMLATFIVSGLMHELIYFYVI), 260–280 (TWEVTCFFLLHGVVTCLEIAM), and 292–312 (AVSGLAITVFLLVTAGWLFYP).

This sequence belongs to the wax synthase family.

It localises to the membrane. It catalyses the reaction a long chain fatty alcohol + a fatty acyl-CoA = a wax ester + CoA. Catalyzes the final step in the synthesis of long-chain linear esters (waxes). The polypeptide is Probable long-chain-alcohol O-fatty-acyltransferase 2 (AT2) (Arabidopsis thaliana (Mouse-ear cress)).